Here is a 284-residue protein sequence, read N- to C-terminus: uncharacterized protein (284 aa).

This is an uncharacterized protein from Methanothermobacter thermautotrophicus (Methanobacterium thermoformicicum).